We begin with the raw amino-acid sequence, 333 residues long: 5-formaminoimidazole-4-carboxamide-1-(beta)-D-ribofuranosyl 5'-monophosphate synthetase (333 aa).

The 5-amino-1-(5-phospho-beta-D-ribosyl)imidazole-4-carboxamide site is built by H10 and S70. Residues K91–E324 form the ATP-grasp domain. Residues P121–Y181 and E203 contribute to the ATP site. 5-amino-1-(5-phospho-beta-D-ribosyl)imidazole-4-carboxamide is bound at residue N231. Positions 269 and 282 each coordinate Mg(2+).

The protein belongs to the phosphohexose mutase family. Mg(2+) serves as cofactor. Mn(2+) is required as a cofactor.

It carries out the reaction 5-amino-1-(5-phospho-beta-D-ribosyl)imidazole-4-carboxamide + formate + ATP = 5-formamido-1-(5-phospho-D-ribosyl)imidazole-4-carboxamide + ADP + phosphate. Its pathway is purine metabolism; IMP biosynthesis via de novo pathway; 5-formamido-1-(5-phospho-D-ribosyl)imidazole-4-carboxamide from 5-amino-1-(5-phospho-D-ribosyl)imidazole-4-carboxamide (formate route): step 1/1. Its function is as follows. Catalyzes the ATP- and formate-dependent formylation of 5-aminoimidazole-4-carboxamide-1-beta-d-ribofuranosyl 5'-monophosphate (AICAR) to 5-formaminoimidazole-4-carboxamide-1-beta-d-ribofuranosyl 5'-monophosphate (FAICAR) in the absence of folates. This Pyrococcus horikoshii (strain ATCC 700860 / DSM 12428 / JCM 9974 / NBRC 100139 / OT-3) protein is 5-formaminoimidazole-4-carboxamide-1-(beta)-D-ribofuranosyl 5'-monophosphate synthetase.